Here is a 182-residue protein sequence, read N- to C-terminus: Oligoribonuclease (182 aa).

In terms of domain architecture, Exonuclease spans 8-171 (LIWIDLEMTG…DDIRESIKEL (164 aa)). Residue Tyr129 is part of the active site.

Belongs to the oligoribonuclease family.

Its subcellular location is the cytoplasm. 3'-to-5' exoribonuclease specific for small oligoribonucleotides. In Haemophilus influenzae (strain PittGG), this protein is Oligoribonuclease.